Here is a 771-residue protein sequence, read N- to C-terminus: DNA polymerase 1 (771 aa).

Belongs to the DNA polymerase type-B family.

The enzyme catalyses DNA(n) + a 2'-deoxyribonucleoside 5'-triphosphate = DNA(n+1) + diphosphate. The sequence is that of DNA polymerase 1 (polI) from Pyrococcus abyssi (strain GE5 / Orsay).